We begin with the raw amino-acid sequence, 523 residues long: Cytochrome P450 52A3-B (523 aa).

A helical membrane pass occupies residues 17 to 34 (WYTILFGAAFTYFLSIAL). Position 471 (cysteine 471) interacts with heme.

The protein belongs to the cytochrome P450 family. Heme is required as a cofactor.

The protein localises to the membrane. In terms of biological role, together with an NADPH cytochrome P450 the enzyme system catalyzes the terminal hydroxylation as the first step in the assimilation of alkanes and fatty acids. This is Cytochrome P450 52A3-B (CYP52A3-B) from Candida maltosa (Yeast).